Consider the following 52-residue polypeptide: Large ribosomal subunit protein bL33 (52 aa).

This sequence belongs to the bacterial ribosomal protein bL33 family.

This is Large ribosomal subunit protein bL33 from Anaeromyxobacter sp. (strain Fw109-5).